Reading from the N-terminus, the 618-residue chain is Matrix metalloproteinase-24 (618 aa).

Positions 1 to 41 are cleaved as a signal peptide; sequence MPRSRGGRAAPGQASRWSGWRAPGRLLPLLPALCCLAAAAG. Residues 42 to 128 constitute a propeptide that is removed on maturation; that stretch reads AGKPAGADAP…HLSRRRRNKR (87 aa). At 42 to 575 the chain is on the extracellular side; it reads AGKPAGADAP…IDDVPGSVNA (534 aa). Residues 110-117 carry the Cysteine switch motif; the sequence is PRCGVPDH. Residues C112 and H255 each coordinate Zn(2+). Residue E256 is part of the active site. Residues H259 and H265 each coordinate Zn(2+). The interval 296–352 is disordered; sequence QKIYGPPAEPLEPTRPLPTLPVRRIHSPSERKHERHPRPPRPPLGDRPSTPGAKPNI. A compositionally biased stretch (pro residues) spans 302–314; sequence PAEPLEPTRPLPT. Hemopexin repeat units lie at residues 350–398, 399–444, 446–494, and 495–542; these read PNIC…WKGL, PARI…GSCL, REGI…KGIP, and QAPQ…WMGC. An intrachain disulfide couples C353 to C542. Residues 576 to 596 form a helical membrane-spanning segment; that stretch reads VAVVVPCTLSLCLLVLLYTIF. Over 597–618 the chain is Cytoplasmic; sequence QFKNKAGPQPVTYYKRPVQEWV. A PDZ-binding motif is present at residues 616–618; the sequence is EWV.

This sequence belongs to the peptidase M10A family. Interacts with GRIP1 and GRIP2. Interacts (via PDZ-binding motif) with APBA3 (via PDZ domain). Zn(2+) serves as cofactor. It depends on Ca(2+) as a cofactor. Cleaved by a furin endopeptidase in the trans-Golgi network. In terms of tissue distribution, mainly expressed in neuronal cells of both central and peripheral nervous systems. Expressed by CGRP-containing peptidergic nociceptors in dorsal root ganglia. Expressed in adult neural stem cell and ependymocytes. Expressed at low level in testis.

Its subcellular location is the cell membrane. It localises to the golgi apparatus. It is found in the trans-Golgi network membrane. The protein resides in the secreted. The protein localises to the extracellular space. Its subcellular location is the extracellular matrix. Metalloprotease that mediates cleavage of N-cadherin (CDH2) and acts as a regulator of neuro-immune interactions and neural stem cell quiescence. Involved in cell-cell interactions between nociceptive neurites and mast cells, possibly by mediating cleavage of CDH2, thereby acting as a mediator of peripheral thermal nociception and inflammatory hyperalgesia. Key regulator of neural stem cells quiescence by mediating cleavage of CDH2, affecting CDH2-mediated anchorage of neural stem cells to ependymocytes in the adult subependymal zone, leading to modulate their quiescence. May play a role in axonal growth. Able to activate progelatinase A. May also be a proteoglycanase involved in degradation of proteoglycans, such as dermatan sulfate and chondroitin sulfate proteoglycans. Cleaves partially fibronectin, but not collagen type I, nor laminin. The protein is Matrix metalloproteinase-24 (Mmp24) of Mus musculus (Mouse).